Reading from the N-terminus, the 282-residue chain is Follicle cell protein 3C-1 (282 aa).

The tract at residues 103-156 (EASTETIGNNGTTETTVGEAPIIGSSEGSTRSMEPTTASPLMSTNPSSSSSLVS) is disordered. Low complexity predominate over residues 106–118 (TETIGNNGTTETT). Residues 128-140 (SEGSTRSMEPTTA) show a composition bias toward polar residues. Residues 141–156 (SPLMSTNPSSSSSLVS) are compositionally biased toward low complexity.

Expressed in follicle cells during vitelline membrane formation.

The sequence is that of Follicle cell protein 3C-1 (Fcp3C) from Drosophila melanogaster (Fruit fly).